Here is a 372-residue protein sequence, read N- to C-terminus: DNA-directed RNA polymerase subunit alpha (372 aa).

The segment at 1–268 (MIFDEDSNSI…DQFQPFINFD (268 aa)) is alpha N-terminal domain (alpha-NTD). The alpha C-terminal domain (alpha-CTD) stretch occupies residues 280-372 (KDTLPYDSNL…ESLSKQYSEE (93 aa)).

It belongs to the RNA polymerase alpha chain family. Homodimer. The RNAP catalytic core consists of 2 alpha, 1 beta, 1 beta' and 1 omega subunit. When a sigma factor is associated with the core the holoenzyme is formed, which can initiate transcription.

It catalyses the reaction RNA(n) + a ribonucleoside 5'-triphosphate = RNA(n+1) + diphosphate. Functionally, DNA-dependent RNA polymerase catalyzes the transcription of DNA into RNA using the four ribonucleoside triphosphates as substrates. In Ehrlichia chaffeensis (strain ATCC CRL-10679 / Arkansas), this protein is DNA-directed RNA polymerase subunit alpha.